The sequence spans 220 residues: MAKNRFNQHWLHDHINDPYVKMAQREGYRARAAYKLKEIDEQDKLIRPGQVIVDLGATPGSWSQYARNKLAQGKKRDTEREGGIDGTIVALDILPMEPIADVHFLQGDFREDEVLHQLEEVLEGRDVDLVISDMAPNLSGVASADAARIEHLCDLALEFAQNHLKPDGALLVKCFHGSGYSQIVEKFKQQFKTVAPRKPKASRDKSSETFILGRHLKRPR.

Residues Gly-60, Trp-62, Asp-92, Asp-108, and Asp-133 each contribute to the S-adenosyl-L-methionine site. Lys-173 functions as the Proton acceptor in the catalytic mechanism. Positions 195-220 are disordered; that stretch reads APRKPKASRDKSSETFILGRHLKRPR.

Belongs to the class I-like SAM-binding methyltransferase superfamily. RNA methyltransferase RlmE family.

The protein resides in the cytoplasm. It carries out the reaction uridine(2552) in 23S rRNA + S-adenosyl-L-methionine = 2'-O-methyluridine(2552) in 23S rRNA + S-adenosyl-L-homocysteine + H(+). Its function is as follows. Specifically methylates the uridine in position 2552 of 23S rRNA at the 2'-O position of the ribose in the fully assembled 50S ribosomal subunit. In Burkholderia lata (strain ATCC 17760 / DSM 23089 / LMG 22485 / NCIMB 9086 / R18194 / 383), this protein is Ribosomal RNA large subunit methyltransferase E.